The sequence spans 100 residues: Large ribosomal subunit protein uL23 (100 aa).

It belongs to the universal ribosomal protein uL23 family. Part of the 50S ribosomal subunit. Contacts protein L29, and trigger factor when it is bound to the ribosome.

In terms of biological role, one of the early assembly proteins it binds 23S rRNA. One of the proteins that surrounds the polypeptide exit tunnel on the outside of the ribosome. Forms the main docking site for trigger factor binding to the ribosome. The protein is Large ribosomal subunit protein uL23 of Mycobacterium leprae (strain Br4923).